The chain runs to 637 residues: Chaperone protein HtpG (637 aa).

The a; substrate-binding stretch occupies residues methionine 1–arginine 345. The tract at residues glutamate 346–lysine 562 is b. Residues leucine 563–lysine 637 are c.

This sequence belongs to the heat shock protein 90 family. Homodimer.

It localises to the cytoplasm. In terms of biological role, molecular chaperone. Has ATPase activity. This is Chaperone protein HtpG from Shewanella denitrificans (strain OS217 / ATCC BAA-1090 / DSM 15013).